Consider the following 250-residue polypeptide: Functional amyloid subunit FapC (250 aa).

Positions 1–24 (MKPTMALKPLVFALAALMAVAAQA) are cleaved as a signal peptide. The FapC_R1 repeat unit spans residues 62–95 (NNAGANGSLSNSKGNLGANIAAGSGNQQDNAAAI). The segment at 96–126 (TSSAGDAATVFAVADIYQESKDNKFTNKGTQ) is linker 1. One copy of the FapC_R2 repeat lies at 127–160 (NNALLNNSANNSSGNVGVNVAAGQGNQQKNNLAI). Residues 161 to 199 (VTADGKNVAAASNTEQVSLDNHFLNEASSKHSYKPQYVV) are linker 2. The stretch at 200 to 233 (NNAGLLNSANNASGNIGVNVAAGAGNQQSNTLTL) is one FapC_R3 repeat. The Cys-X-X-Cys motif lies at 237–240 (CTVC).

This sequence belongs to the FapB/FapC family. As to quaternary structure, the major component of purified amyloid fibrils. Forms fibrils in vitro; in the presence of FapA the fibrils are about 50% wider. Interacts with FapA. Fibrillates in vitro; this is inhibited by FapA. Fibrils are resistant to boiling in 2% (weight/vol) SDS and require &gt;90% (vol/vol) formic acid to dissolve.

The protein resides in the fimbrium. The protein localises to the secreted. Functionally, the major functional amyloid subunit in this bacterium. Intrinsically disordered in its monomeric state. Upon overexpression of the endogenous six-gene locus (fapA-fapF) in situ, cells form large clumps during liquid growth, make large amounts of biofilm and produce amyloid fibrils. Expression of the 6 gene operon in E.coli strain BL21(DE3) induces flocculation and biofilm formation with copious extracellular fibrils. This is Functional amyloid subunit FapC from Pseudomonas fluorescens.